The sequence spans 421 residues: Adenylosuccinate synthetase (421 aa).

Residues 11-17 (GDEGKGK) and 39-41 (GHT) contribute to the GTP site. Residue Asp12 is the Proton acceptor of the active site. Mg(2+)-binding residues include Asp12 and Gly39. IMP contacts are provided by residues 12-15 (DEGK), 37-40 (NAGH), Thr129, Arg143, Asn219, Thr234, and Arg298. His40 functions as the Proton donor in the catalytic mechanism. 294–300 (VTTGRRR) contributes to the substrate binding site. Residues Arg300, 326-328 (KLD), and 409-411 (GTG) each bind GTP.

The protein belongs to the adenylosuccinate synthetase family. Homodimer. Requires Mg(2+) as cofactor.

It is found in the cytoplasm. It catalyses the reaction IMP + L-aspartate + GTP = N(6)-(1,2-dicarboxyethyl)-AMP + GDP + phosphate + 2 H(+). The protein operates within purine metabolism; AMP biosynthesis via de novo pathway; AMP from IMP: step 1/2. In terms of biological role, plays an important role in the de novo pathway and in the salvage pathway of purine nucleotide biosynthesis. Catalyzes the first committed step in the biosynthesis of AMP from IMP. This Paracoccidioides lutzii (strain ATCC MYA-826 / Pb01) (Paracoccidioides brasiliensis) protein is Adenylosuccinate synthetase.